A 440-amino-acid polypeptide reads, in one-letter code: 3-phosphoshikimate 1-carboxyvinyltransferase (440 aa).

The 3-phosphoshikimate site is built by K26, S27, and R31. Residue K26 coordinates phosphoenolpyruvate. 2 residues coordinate phosphoenolpyruvate: G99 and R127. Residues S172, Q174, D320, and K347 each contribute to the 3-phosphoshikimate site. Phosphoenolpyruvate is bound at residue Q174. The active-site Proton acceptor is the D320. Phosphoenolpyruvate is bound by residues R351 and R392.

The protein belongs to the EPSP synthase family. As to quaternary structure, monomer.

The protein resides in the cytoplasm. It catalyses the reaction 3-phosphoshikimate + phosphoenolpyruvate = 5-O-(1-carboxyvinyl)-3-phosphoshikimate + phosphate. Its pathway is metabolic intermediate biosynthesis; chorismate biosynthesis; chorismate from D-erythrose 4-phosphate and phosphoenolpyruvate: step 6/7. Catalyzes the transfer of the enolpyruvyl moiety of phosphoenolpyruvate (PEP) to the 5-hydroxyl of shikimate-3-phosphate (S3P) to produce enolpyruvyl shikimate-3-phosphate and inorganic phosphate. This is 3-phosphoshikimate 1-carboxyvinyltransferase from Xanthomonas axonopodis pv. citri (strain 306).